We begin with the raw amino-acid sequence, 359 residues long: uncharacterized protein (359 aa).

Positions 1 to 17 are cleaved as a signal peptide; sequence MLGRSLTSVLIVPTGIG. Residue cysteine 18 is the site of N-palmitoyl cysteine attachment. Cysteine 18 carries the S-diacylglycerol cysteine lipid modification.

It localises to the cell membrane. This is an uncharacterized protein from Synechococcus sp. (strain ATCC 27144 / PCC 6301 / SAUG 1402/1) (Anacystis nidulans).